The chain runs to 437 residues: Sonic hedgehog protein (437 aa).

A signal peptide spans 1–24; it reads MLLLLARCFLVILASSLLVCPGLA. Cys-25 is lipidated: N-palmitoyl cysteine. A Cardin-Weintraub motif is present at residues 33–39; that stretch reads KRRHPKK. 7 residues coordinate Ca(2+): Glu-90, Glu-91, Asp-96, Thr-126, Glu-127, Asp-130, and Asp-132. Zn(2+) is bound by residues His-141, Asp-148, and His-183. Residue Gly-198 is the site of Cholesterol glycine ester attachment. An N-linked (GlcNAc...) asparagine glycan is attached at Asn-279.

It belongs to the hedgehog family. In terms of assembly, interacts with HHATL/GUP1 which negatively regulates HHAT-mediated palmitoylation of the SHH N-terminus. Interacts with BOC and CDON. Interacts with HHIP. Interacts with DISP1 via its cholesterol anchor. Interacts with SCUBE2. Interacts with glypican GPC3. As to quaternary structure, multimer. Post-translationally, the C-terminal domain displays an autoproteolysis activity and a cholesterol transferase activity. Both activities result in the cleavage of the full-length protein and covalent attachment of a cholesterol moiety to the C-terminal of the newly generated N-terminal fragment (ShhN). Cholesterylation is required for the sonic hedgehog protein N-product targeting to lipid rafts and multimerization. ShhN is the active species in both local and long-range signaling, whereas the C-product (ShhC) is degraded in the endoplasmic reticulum. N-palmitoylation by HHAT of ShhN is required for sonic hedgehog protein N-product multimerization and full activity. It is a prerequisite for the membrane-proximal positioning and the subsequent shedding of this N-terminal peptide. In terms of processing, the lipidated N- and C-terminal peptides of ShhNp can be cleaved (shedding). The N-terminal palmitoylated peptide is cleaved at the Cardin-Weintraub (CW) motif site. The cleavage reduced the interactions with heparan sulfate. The cleavage is enhanced by SCUBE2. In terms of tissue distribution, expressed in a number of embryonic tissues including the notochord, ventral neural tube, floor plate, lung bud, zone of polarizing activity and posterior distal mesenchyme of limbs. In the adult, expressed in lung and neural retina.

The protein localises to the endoplasmic reticulum membrane. It localises to the golgi apparatus membrane. The protein resides in the cell membrane. The catalysed reaction is glycyl-L-cysteinyl-[protein] + cholesterol + H(+) = [protein]-C-terminal glycyl cholesterol ester + N-terminal L-cysteinyl-[protein]. Functionally, the C-terminal part of the sonic hedgehog protein precursor displays an autoproteolysis and a cholesterol transferase activity. Both activities result in the cleavage of the full-length protein into two parts (ShhN and ShhC) followed by the covalent attachment of a cholesterol moiety to the C-terminal of the newly generated ShhN. Both activities occur in the reticulum endoplasmic. Once cleaved, ShhC is degraded in the endoplasmic reticulum. Its function is as follows. The dually lipidated sonic hedgehog protein N-product (ShhNp) is a morphogen which is essential for a variety of patterning events during development. Induces ventral cell fate in the neural tube and somites. Involved in the patterning of the anterior-posterior axis of the developing limb bud. Essential for axon guidance. Binds to the patched (PTCH1) receptor, which functions in association with smoothened (SMO), to activate the transcription of target genes. In the absence of SHH, PTCH1 represses the constitutive signaling activity of SMO. The protein is Sonic hedgehog protein of Mus musculus (Mouse).